Consider the following 246-residue polypeptide: Ribonuclease 3 (246 aa).

Positions 30 to 152 (ISWIEKNLGH…MIGAIFLESG (123 aa)) constitute an RNase III domain. Glutamate 65 contacts Mg(2+). Residue aspartate 69 is part of the active site. Mg(2+) is bound by residues aspartate 138 and glutamate 141. Glutamate 141 is a catalytic residue. The region spanning 177–246 (HPKSALQEWA…AQALLDILAQ (70 aa)) is the DRBM domain.

This sequence belongs to the ribonuclease III family. Homodimer. Requires Mg(2+) as cofactor.

It localises to the cytoplasm. The enzyme catalyses Endonucleolytic cleavage to 5'-phosphomonoester.. Functionally, digests double-stranded RNA. Involved in the processing of primary rRNA transcript to yield the immediate precursors to the large and small rRNAs (23S and 16S). Processes some mRNAs, and tRNAs when they are encoded in the rRNA operon. Processes pre-crRNA and tracrRNA of type II CRISPR loci if present in the organism. In Zymomonas mobilis subsp. mobilis (strain ATCC 31821 / ZM4 / CP4), this protein is Ribonuclease 3.